Consider the following 548-residue polypeptide: Chaperonin GroEL (548 aa).

ATP-binding positions include 30–33, Lys-51, 87–91, Gly-415, and Asp-494; these read TLGP and DGTTT.

The protein belongs to the chaperonin (HSP60) family. Forms a cylinder of 14 subunits composed of two heptameric rings stacked back-to-back. Interacts with the co-chaperonin GroES.

It is found in the cytoplasm. It carries out the reaction ATP + H2O + a folded polypeptide = ADP + phosphate + an unfolded polypeptide.. Functionally, together with its co-chaperonin GroES, plays an essential role in assisting protein folding. The GroEL-GroES system forms a nano-cage that allows encapsulation of the non-native substrate proteins and provides a physical environment optimized to promote and accelerate protein folding. In Oleispira antarctica, this protein is Chaperonin GroEL.